The chain runs to 1138 residues: Eukaryotic translation initiation factor 3 subunit A (1138 aa).

The 184-residue stretch at 319-502 (LQRMAAHVLL…NSIYFGTDLT (184 aa)) folds into the PCI domain. 2 disordered regions span residues 590–633 (NNAR…NEIQ) and 817–1138 (ERFR…VKRR). 4 stretches are compositionally biased toward basic and acidic residues: residues 817–903 (ERFR…RVER), 923–967 (DRNE…KEND), 1003–1049 (GRDD…DQPQ), and 1058–1078 (DSPR…RDVR). Over residues 1082–1100 (PKEGGGGVSGGGAGGGGGN) the composition is skewed to gly residues. Over residues 1107–1128 (PREEKAPPKREQAQDKENKAGD) the composition is skewed to basic and acidic residues.

It belongs to the eIF-3 subunit A family. As to quaternary structure, component of the eukaryotic translation initiation factor 3 (eIF-3) complex. The eIF-3 complex interacts with pix.

The protein localises to the cytoplasm. RNA-binding component of the eukaryotic translation initiation factor 3 (eIF-3) complex, which is involved in protein synthesis of a specialized repertoire of mRNAs and, together with other initiation factors, stimulates binding of mRNA and methionyl-tRNAi to the 40S ribosome. The eIF-3 complex specifically targets and initiates translation of a subset of mRNAs involved in cell proliferation. The chain is Eukaryotic translation initiation factor 3 subunit A from Drosophila virilis (Fruit fly).